A 358-amino-acid polypeptide reads, in one-letter code: Alanine racemase (358 aa).

The Proton acceptor; specific for D-alanine role is filled by K35. Position 35 is an N6-(pyridoxal phosphate)lysine (K35). Residue R130 coordinates substrate. Y255 (proton acceptor; specific for L-alanine) is an active-site residue. M303 is a binding site for substrate.

It belongs to the alanine racemase family. It depends on pyridoxal 5'-phosphate as a cofactor.

The enzyme catalyses L-alanine = D-alanine. The protein operates within amino-acid biosynthesis; D-alanine biosynthesis; D-alanine from L-alanine: step 1/1. In terms of biological role, catalyzes the interconversion of L-alanine and D-alanine. May also act on other amino acids. The protein is Alanine racemase (alr) of Shewanella sediminis (strain HAW-EB3).